Reading from the N-terminus, the 697-residue chain is SITS-binding protein (697 aa).

Residues 1-20 are disordered; it reads MARRAKKMASNSGDSSPEPG. Topologically, residues 2-29 are cytoplasmic; the sequence is ARRAKKMASNSGDSSPEPGIKEINETWK. The helical transmembrane segment at 30–50 threads the bilayer; sequence GAIACLGVALLFLMTIGVLYW. N-linked (GlcNAc...) asparagine glycans are attached at residues Asn-112, Asn-134, Asn-162, Asn-386, Asn-405, and Asn-470. 2 helical membrane-spanning segments follow: residues 503-521 and 542-562; these read GLIP…FFIP and WMQI…WVFG. N-linked (GlcNAc...) asparagine glycosylation occurs at Asn-568.

It belongs to the glycosyl hydrolase 31 family. In terms of assembly, homodimer; disulfide-linked. Electroplax tissue, brain (200-fold less), and heart (500-fold less).

Its subcellular location is the membrane. This glycoprotein is probably not a functional part of the chloride channel. The sequence is that of SITS-binding protein from Tetronarce californica (Pacific electric ray).